A 157-amino-acid polypeptide reads, in one-letter code: MRILGIDPGSRKCGYAIVSHTSNKLSLITAGFINITTTRLQEQILDLIEALDCLLDRYEVHEVAIEDIFFGYNPKSVIKLAQFRGALSLKILERIGNFSEYTPLQVKKALTGNGKAAKEQVAFMVKRLLNITSEIKPLDISDAIAVAITHAQRLKPH.

Residues aspartate 7, glutamate 66, and aspartate 139 contribute to the active site. Aspartate 7, glutamate 66, and aspartate 139 together coordinate Mg(2+).

This sequence belongs to the RuvC family. As to quaternary structure, homodimer which binds Holliday junction (HJ) DNA. The HJ becomes 2-fold symmetrical on binding to RuvC with unstacked arms; it has a different conformation from HJ DNA in complex with RuvA. In the full resolvosome a probable DNA-RuvA(4)-RuvB(12)-RuvC(2) complex forms which resolves the HJ. The cofactor is Mg(2+).

The protein localises to the cytoplasm. The enzyme catalyses Endonucleolytic cleavage at a junction such as a reciprocal single-stranded crossover between two homologous DNA duplexes (Holliday junction).. Functionally, the RuvA-RuvB-RuvC complex processes Holliday junction (HJ) DNA during genetic recombination and DNA repair. Endonuclease that resolves HJ intermediates. Cleaves cruciform DNA by making single-stranded nicks across the HJ at symmetrical positions within the homologous arms, yielding a 5'-phosphate and a 3'-hydroxyl group; requires a central core of homology in the junction. The consensus cleavage sequence is 5'-(A/T)TT(C/G)-3'. Cleavage occurs on the 3'-side of the TT dinucleotide at the point of strand exchange. HJ branch migration catalyzed by RuvA-RuvB allows RuvC to scan DNA until it finds its consensus sequence, where it cleaves and resolves the cruciform DNA. The polypeptide is Crossover junction endodeoxyribonuclease RuvC (Helicobacter pylori (strain Shi470)).